A 499-amino-acid polypeptide reads, in one-letter code: Glutathione reductase, cytosolic (499 aa).

FAD is bound by residues Ser-35, Gly-36, Glu-55, Thr-72, Cys-73, and Lys-81. Ser-35 lines the glutathione pocket. Cys-73 and Cys-78 are joined by a disulfide. Residue Tyr-130 coordinates glutathione. Gly-146 provides a ligand contact to FAD. NADP(+) is bound by residues Gly-211, Ile-214, Glu-217, Arg-234, Arg-240, and Gly-297. Positions 338 and 346 each coordinate FAD. Ala-376 lines the NADP(+) pocket. His-472 serves as a coordination point for FAD. His-472 functions as the Proton acceptor in the catalytic mechanism.

Belongs to the class-I pyridine nucleotide-disulfide oxidoreductase family. As to quaternary structure, homodimer. It depends on FAD as a cofactor.

The protein localises to the cytoplasm. It catalyses the reaction 2 glutathione + NADP(+) = glutathione disulfide + NADPH + H(+). Its function is as follows. Catalyzes the reduction of glutathione disulfide (GSSG) to reduced glutathione (GSH). Constitutes the major mechanism to maintain a high GSH:GSSG ratio in the cytosol. The chain is Glutathione reductase, cytosolic from Arabidopsis thaliana (Mouse-ear cress).